We begin with the raw amino-acid sequence, 55 residues long: MAKAATIKIKLLSTADTGFFYVTKKNSRTMTDKMSKRKYDPVVKKHVEFKETKIK.

The protein belongs to the bacterial ribosomal protein bL33 family.

The polypeptide is Large ribosomal subunit protein bL33 (Bartonella henselae (strain ATCC 49882 / DSM 28221 / CCUG 30454 / Houston 1) (Rochalimaea henselae)).